We begin with the raw amino-acid sequence, 777 residues long: Semaphorin-4F (777 aa).

The N-terminal stretch at 1-40 (MLARAERPRPGPRPPPVSLFPPPSSLLLLLLAMLSAPVCG) is a signal peptide. The Extracellular segment spans residues 41–667 (RVPRSVPRTS…PANRAHTVVG (627 aa)). One can recognise a Sema domain in the interval 48-516 (RTSLPISEAD…SHTEVTQVNT (469 aa)). N-linked (GlcNAc...) asparagine glycosylation occurs at Asn70. A disulfide bridge connects residues Cys118 and Cys128. An N-linked (GlcNAc...) asparagine glycan is attached at Asn139. Intrachain disulfides connect Cys146-Cys155, Cys279-Cys390, and Cys303-Cys349. A glycan (N-linked (GlcNAc...) asparagine) is linked at Asn515. One can recognise a PSI domain in the interval 518 to 569 (NCGRLQSCSECILAQDPVCAWSFRLDACVAHAGEHRGMVQDIESADVSSLCP). 3 disulfide bridges follow: Cys519–Cys536, Cys528–Cys545, and Cys593–Cys634. The Ig-like C2-type domain occupies 586-641 (VGHVVLPCSPSSAWASCVWHQPSGVTSLTPRRDGLEVVVTPGAMGAYACECQEGGA). The chain crosses the membrane as a helical span at residues 668–688 (AGLVGFFLGVLAASLTLLLIG). The Cytoplasmic segment spans residues 689-777 (RRQQRRRQRE…PLATCDETSI (89 aa)). Positions 703-742 (DKVGLDLGAPPSGTTSYSQDPPSPSPEDERLPLALGKRGS) are disordered. 2 positions are modified to phosphoserine: Ser725 and Ser727. The PDZ-binding signature appears at 775-777 (TSI).

Belongs to the semaphorin family. In terms of assembly, interacts (via PDZ-binding motif) with DLG4/SAP90 (via PDZ domain 2); this interaction may promote translocation of DLG4/SAP90 to the membrane. As to expression, expressed throughout the adult brain, where it shows particularly strong expression in the hippocampus, corpus callosum, granular layer and deep nuclei of the cerebellum, and the mitral layer of the olfactory bulb (at protein level). At the cellular level, detected in neuronal precursors, postmitotic neurons, pyramidal neurons, and glial cells including mature oligodendocytes and oligodendroglial precursor cells (at protein level).

It is found in the cell membrane. The protein resides in the postsynaptic density. Its subcellular location is the perikaryon. It localises to the cell projection. The protein localises to the dendrite. Probable cell surface receptor that regulates oligodendroglial precursor cell migration. Might also regulate differentiation of oligodendroglial precursor cells. Has growth cone collapse activity against retinal ganglion-cell axons. The sequence is that of Semaphorin-4F (Sema4f) from Mus musculus (Mouse).